Consider the following 1404-residue polypeptide: DNA-directed RNA polymerase subunit beta' (1404 aa).

Residues Cys-60, Cys-62, Cys-75, and Cys-78 each contribute to the Zn(2+) site. Residues Asp-449, Asp-451, and Asp-453 each contribute to the Mg(2+) site. The Zn(2+) site is built by Cys-778, Cys-852, Cys-859, and Cys-862. The segment at 1381–1404 (DRPLEEEEEEEIPQSIADDSDGDE) is disordered. A compositionally biased stretch (acidic residues) spans 1384–1404 (LEEEEEEEIPQSIADDSDGDE).

It belongs to the RNA polymerase beta' chain family. The RNAP catalytic core consists of 2 alpha, 1 beta, 1 beta' and 1 omega subunit. When a sigma factor is associated with the core the holoenzyme is formed, which can initiate transcription. Mg(2+) is required as a cofactor. It depends on Zn(2+) as a cofactor.

The enzyme catalyses RNA(n) + a ribonucleoside 5'-triphosphate = RNA(n+1) + diphosphate. Functionally, DNA-dependent RNA polymerase catalyzes the transcription of DNA into RNA using the four ribonucleoside triphosphates as substrates. This chain is DNA-directed RNA polymerase subunit beta', found in Leptospira borgpetersenii serovar Hardjo-bovis (strain L550).